Reading from the N-terminus, the 424-residue chain is UDP-N-acetylglucosamine 1-carboxyvinyltransferase (424 aa).

Residue 22 to 23 (KN) coordinates phosphoenolpyruvate. Arg96 serves as a coordination point for UDP-N-acetyl-alpha-D-glucosamine. Catalysis depends on Cys120, which acts as the Proton donor. Cys120 carries the post-translational modification 2-(S-cysteinyl)pyruvic acid O-phosphothioketal. UDP-N-acetyl-alpha-D-glucosamine contacts are provided by residues 125–129 (RPVDQ), Asp312, and Ile334.

Belongs to the EPSP synthase family. MurA subfamily.

It is found in the cytoplasm. The catalysed reaction is phosphoenolpyruvate + UDP-N-acetyl-alpha-D-glucosamine = UDP-N-acetyl-3-O-(1-carboxyvinyl)-alpha-D-glucosamine + phosphate. Its pathway is cell wall biogenesis; peptidoglycan biosynthesis. Cell wall formation. Adds enolpyruvyl to UDP-N-acetylglucosamine. This Polynucleobacter necessarius subsp. necessarius (strain STIR1) protein is UDP-N-acetylglucosamine 1-carboxyvinyltransferase.